Consider the following 311-residue polypeptide: GTP cyclohydrolase MptA (311 aa).

The protein belongs to the GTP cyclohydrolase IV family. Homodimer. Fe(2+) serves as cofactor.

The enzyme catalyses GTP + H2O = 7,8-dihydroneopterin 2',3'-cyclic phosphate + formate + diphosphate + H(+). It participates in cofactor biosynthesis; 5,6,7,8-tetrahydromethanopterin biosynthesis. In terms of biological role, converts GTP to 7,8-dihydro-D-neopterin 2',3'-cyclic phosphate, the first intermediate in the biosynthesis of coenzyme methanopterin. This Methanocorpusculum labreanum (strain ATCC 43576 / DSM 4855 / Z) protein is GTP cyclohydrolase MptA.